Here is a 688-residue protein sequence, read N- to C-terminus: Polyphosphate kinase (688 aa).

Asparagine 45 serves as a coordination point for ATP. 2 residues coordinate Mg(2+): arginine 375 and arginine 405. The PLD phosphodiesterase domain maps to 430–464 (PGLKIHAKLFLISRKENGEVVRYAHIGTGNFNEKT). Histidine 435 acts as the Phosphohistidine intermediate in catalysis. The ATP site is built by tyrosine 468, arginine 564, and histidine 592.

Belongs to the polyphosphate kinase 1 (PPK1) family. Requires Mg(2+) as cofactor. Post-translationally, an intermediate of this reaction is the autophosphorylated ppk in which a phosphate is covalently linked to a histidine residue through a N-P bond.

It carries out the reaction [phosphate](n) + ATP = [phosphate](n+1) + ADP. Functionally, catalyzes the reversible transfer of the terminal phosphate of ATP to form a long-chain polyphosphate (polyP). This chain is Polyphosphate kinase, found in Escherichia coli O6:H1 (strain CFT073 / ATCC 700928 / UPEC).